The following is a 449-amino-acid chain: MGKEKFHINIVVIGHVDSGKSTTTGHLIYKLGGIDKRVIERFEKEAAEMNKRSFKYAWVLDKLKAERERGITIDIALWKFETTKYYCTVIDAPGHRDFIKNMITGTSQADCAVLIIDSTTGGFEAGISKDGQTREHALLAFTLGVKQMICCCNKMDATTPKYSKARYDEIIKEVSSYLKKVGYNPDKIPFVPISGFEGDNMIERSTNLDWYKGPTLLEALDQINEPKRPSDKPLRLPLQDVYKIGGIGTVPVGRVETGMIKPGMVVTFAPTGLTTEVKSVEMHHESLLEALPGDNVGFNVKNVAVKDLKRGYVASNSKDDPAKGAANFTSQVIIMNHPGQIGNGYAPVLDCHTSHIAVKFSEILTKIDRRSGKEIEKEPKFLKNGDAGMVKMTPTKPMVVETFSEYPPLGRFAVRDMRQTVAVGVIKSVDKKDPTGAKVTKAAVKKGAK.

Positions 5–230 (KFHINIVVIG…DQINEPKRPS (226 aa)) constitute a tr-type G domain. The tract at residues 14-21 (GHVDSGKS) is G1. 14–21 (GHVDSGKS) provides a ligand contact to GTP. Residue Lys55 is modified to N6,N6-dimethyllysine. The G2 stretch occupies residues 70–74 (GITID). Lys79 carries the N6,N6,N6-trimethyllysine modification. The G3 stretch occupies residues 91 to 94 (DAPG). GTP contacts are provided by residues 91-95 (DAPGH) and 153-156 (NKMD). The interval 153–156 (NKMD) is G4. Lys187 carries the N6,N6,N6-trimethyllysine modification. The tract at residues 194–196 (SGF) is G5. At Lys261 the chain carries N6-methyllysine. Lys306 and Lys396 each carry N6,N6,N6-trimethyllysine. Glycyl lysine isopeptide (Lys-Gly) (interchain with G-Cter in ubiquitin) cross-links involve residues Lys438 and Lys441.

Belongs to the TRAFAC class translation factor GTPase superfamily. Classic translation factor GTPase family. EF-Tu/EF-1A subfamily.

Its subcellular location is the cytoplasm. Its function is as follows. This protein promotes the GTP-dependent binding of aminoacyl-tRNA to the A-site of ribosomes during protein biosynthesis. The polypeptide is Elongation factor 1-alpha 1 (A1) (Arabidopsis thaliana (Mouse-ear cress)).